The chain runs to 663 residues: Dual specificity protein phosphatase 8 (663 aa).

Positions 23–138 constitute a Rhodanese domain; sequence GPGGPLVIDS…FSSCFPGLCE (116 aa). Residues 160 to 302 form the Tyrosine-protein phosphatase domain; that stretch reads GLTRILPHLY…LLEYERSLKL (143 aa). Cys-246 (phosphocysteine intermediate) is an active-site residue. 2 disordered regions span residues 313–367 and 404–624; these read LGTP…STAP and YAPS…FKRR. Composition is skewed to low complexity over residues 334-353, 427-448, and 546-557; these read STSE…REGS, LDSP…PDSV, and SAGAPGPGNSSS. Residues 558–577 are compositionally biased toward gly residues; it reads SGGGGGGGGGGGGGGGGGGS. Residues 578–600 are compositionally biased toward low complexity; it reads SSSNSSSSSSSSSSSSSSSSSSS.

The protein belongs to the protein-tyrosine phosphatase family. Non-receptor class dual specificity subfamily. As to quaternary structure, monomer. In terms of tissue distribution, expressed predominantly in brain and lung.

Its subcellular location is the cytoplasm. The protein resides in the nucleus. The enzyme catalyses O-phospho-L-tyrosyl-[protein] + H2O = L-tyrosyl-[protein] + phosphate. It carries out the reaction O-phospho-L-seryl-[protein] + H2O = L-seryl-[protein] + phosphate. It catalyses the reaction O-phospho-L-threonyl-[protein] + H2O = L-threonyl-[protein] + phosphate. Has phosphatase activity with synthetic phosphatase substrates and negatively regulates mitogen-activated protein kinase activity, presumably by catalysing their dephosphorylation. Expected to display protein phosphatase activity toward phosphotyrosine, phosphoserine and phosphothreonine residues. The sequence is that of Dual specificity protein phosphatase 8 (Dusp8) from Mus musculus (Mouse).